The primary structure comprises 723 residues: Nucleolar protein 11 (723 aa).

Its subcellular location is the nucleus. The protein localises to the nucleolus. Ribosome biogenesis factor. May be required for both optimal rDNA transcription and pre-rRNA processing. The sequence is that of Nucleolar protein 11 (NOL11) from Gallus gallus (Chicken).